The primary structure comprises 614 residues: Glucose oxidase 1 (614 aa).

The first 15 residues, 1 to 15 (MKSIILSCFVISAAA), serve as a signal peptide directing secretion. Residues Leu-52, Thr-53, and Glu-73 each coordinate FAD. Residue Asn-112 is glycosylated (N-linked (GlcNAc...) asparagine). The tract at residues 117–136 (IRSGNGLGGSTLTNGGSWTR) is disordered. Ser-126, Asn-130, Gly-131, and Ser-133 together coordinate FAD. N-linked (GlcNAc...) asparagine glycans are attached at residues Asn-184 and Asn-191. A disulfide bridge links Cys-187 with Cys-229. Val-273 contacts FAD. N-linked (GlcNAc...) asparagine glycans are attached at residues Asn-279, Asn-383, and Asn-416. His-544 serves as the catalytic Proton acceptor. Residues Arg-565 and Val-566 each coordinate O2. Residues Gly-577 and Met-589 each contribute to the FAD site.

The protein belongs to the GMC oxidoreductase family. As to quaternary structure, homodimer. FAD is required as a cofactor.

The protein resides in the secreted. It localises to the cell wall. The protein localises to the cytoplasm. It is found in the extracellular space. Its subcellular location is the extracellular matrix. The enzyme catalyses beta-D-glucose + O2 = D-glucono-1,5-lactone + H2O2. Functionally, glucose oxidase catalyzes the oxidation of beta-D-glucose to D-glucono-delta-lactone and hydrogen peroxide in the presence of molecular oxygen. The chain is Glucose oxidase 1 from Penicillium expansum (Blue mold rot fungus).